A 473-amino-acid polypeptide reads, in one-letter code: Nitrogenase vanadium-iron protein alpha chain (473 aa).

[8Fe-7S] cluster is bound by residues C49, C74, and C137. [7Fe-V-9S-C-homocitryl] cluster-binding residues include C256 and H422.

The protein belongs to the NifD/NifK/NifE/NifN family. Hexamer of two alpha, two beta, and two delta chains. [8Fe-7S] cluster serves as cofactor. Requires [7Fe-V-9S-C-homocitryl] cluster as cofactor.

The enzyme catalyses N2 + 8 reduced [2Fe-2S]-[ferredoxin] + 16 ATP + 16 H2O = H2 + 8 oxidized [2Fe-2S]-[ferredoxin] + 2 NH4(+) + 16 ADP + 16 phosphate + 6 H(+). This vanadium-iron protein is part of the nitrogenase complex that catalyzes the key enzymatic reactions in nitrogen fixation. The sequence is that of Nitrogenase vanadium-iron protein alpha chain (vnfD) from Azotobacter chroococcum mcd 1.